The sequence spans 218 residues: Cytochrome b6 (218 aa).

A helical transmembrane segment spans residues 35–55 (IFYCLGGITLVCFLIQFATGF). Cys-38 is a binding site for heme c. 2 residues coordinate heme b: His-89 and His-103. 3 helical membrane-spanning segments follow: residues 93-113 (ASMMVLMLILHVFRVYLTGGF), 119-139 (LTWVTGVVMAVITVAFGVTGY), and 189-209 (LHTFVLPWSLAVFMLMHFLMI). Heme b contacts are provided by His-190 and His-205.

Belongs to the cytochrome b family. PetB subfamily. In terms of assembly, the 4 large subunits of the cytochrome b6-f complex are cytochrome b6, subunit IV (17 kDa polypeptide, PetD), cytochrome f and the Rieske protein, while the 4 small subunits are PetG, PetL, PetM and PetN. The complex functions as a dimer. Requires heme b as cofactor. Heme c is required as a cofactor.

The protein localises to the cellular thylakoid membrane. Its function is as follows. Component of the cytochrome b6-f complex, which mediates electron transfer between photosystem II (PSII) and photosystem I (PSI), cyclic electron flow around PSI, and state transitions. This Prochlorococcus marinus (strain MIT 9515) protein is Cytochrome b6.